The primary structure comprises 30 residues: Cysteine-rich venom protein okinavin (30 aa).

The tract at residues 1–30 (SVDFDSESPRKPXIQNEIVDLHNPLRRXVN) is disordered.

This sequence belongs to the CRISP family. Post-translationally, contains 8 disulfide bonds. Expressed by the venom gland.

Its subcellular location is the secreted. Functionally, inhibits calcium-activated potassium channels (KCa), voltage-gated potassium channel (Kv), and the calcium release channel/ryanodine receptor (RyR). This chain is Cysteine-rich venom protein okinavin, found in Ovophis okinavensis (Ryukyu Island pit viper).